We begin with the raw amino-acid sequence, 613 residues long: Zinc metalloproteinase-disintegrin-like VMP-III (613 aa).

An N-terminal signal peptide occupies residues 1–20 (MIQVLLVTLCLAAFPYQGSS). Residues 21–190 (IILDSGNVND…KKASQLVVTP (170 aa)) constitute a propeptide that is removed on maturation. The Peptidase M12B domain maps to 200–396 (KYIELVIVAD…NRPPCILNKP (197 aa)). Residue Glu-203 coordinates Ca(2+). Asn-219 is a glycosylation site (N-linked (GlcNAc...) asparagine). Residue Asp-287 participates in Ca(2+) binding. Disulfide bonds link Cys-311/Cys-391, Cys-351/Cys-375, and Cys-353/Cys-358. His-336 provides a ligand contact to Zn(2+). Glu-337 is an active-site residue. Positions 340 and 346 each coordinate Zn(2+). Ca(2+) is bound by residues Cys-391, Asn-394, Val-406, Asn-409, Phe-411, Glu-413, Glu-416, and Asp-419. Residues 404–490 (PPVCGNYFVE…ECPTDDFQRN (87 aa)) enclose the Disintegrin domain. Cystine bridges form between Cys-407–Cys-436, Cys-418–Cys-431, Cys-420–Cys-426, Cys-430–Cys-453, Cys-444–Cys-450, Cys-449–Cys-475, Cys-462–Cys-482, Cys-469–Cys-501, Cys-494–Cys-506, Cys-513–Cys-563, Cys-528–Cys-574, Cys-541–Cys-551, Cys-558–Cys-600, and Cys-594–Cys-606. The short motif at 468-470 (ECD) is the D/ECD-tripeptide element. Asn-503 is a glycosylation site (N-linked (GlcNAc...) asparagine).

The protein belongs to the venom metalloproteinase (M12B) family. P-III subfamily. P-IIIa sub-subfamily. As to quaternary structure, monomer. Zn(2+) serves as cofactor. In terms of tissue distribution, expressed by the venom gland.

The protein resides in the secreted. Snake venom metalloproteinase that impairs hemostasis in the envenomed animal. The chain is Zinc metalloproteinase-disintegrin-like VMP-III from Agkistrodon piscivorus leucostoma (Western cottonmouth).